The following is a 163-amino-acid chain: uncharacterized protein (163 aa).

This is an uncharacterized protein from Rickettsia conorii (strain ATCC VR-613 / Malish 7).